The sequence spans 394 residues: Phosphoglycerate kinase (394 aa).

Substrate contacts are provided by residues 21–23 (DFN), Arg-37, 60–63 (HLGR), Arg-119, and Arg-152. Residues Lys-202, Gly-293, Glu-324, and 350 to 353 (GGDS) each bind ATP.

The protein belongs to the phosphoglycerate kinase family. As to quaternary structure, monomer.

It is found in the cytoplasm. It carries out the reaction (2R)-3-phosphoglycerate + ATP = (2R)-3-phospho-glyceroyl phosphate + ADP. It participates in carbohydrate degradation; glycolysis; pyruvate from D-glyceraldehyde 3-phosphate: step 2/5. The sequence is that of Phosphoglycerate kinase from Caldanaerobacter subterraneus subsp. tengcongensis (strain DSM 15242 / JCM 11007 / NBRC 100824 / MB4) (Thermoanaerobacter tengcongensis).